The sequence spans 84 residues: Exodeoxyribonuclease 7 small subunit (84 aa).

This sequence belongs to the XseB family. Heterooligomer composed of large and small subunits.

It is found in the cytoplasm. The catalysed reaction is Exonucleolytic cleavage in either 5'- to 3'- or 3'- to 5'-direction to yield nucleoside 5'-phosphates.. In terms of biological role, bidirectionally degrades single-stranded DNA into large acid-insoluble oligonucleotides, which are then degraded further into small acid-soluble oligonucleotides. The polypeptide is Exodeoxyribonuclease 7 small subunit (Bartonella henselae (strain ATCC 49882 / DSM 28221 / CCUG 30454 / Houston 1) (Rochalimaea henselae)).